A 339-amino-acid chain; its full sequence is Methionine import ATP-binding protein MetN 2 (339 aa).

An ABC transporter domain is found at 2-241 (ISFNNVSKVY…PKTKTTQNFV (240 aa)). 38–45 (GFSGAGKS) provides a ligand contact to ATP.

It belongs to the ABC transporter superfamily. Methionine importer (TC 3.A.1.24) family. In terms of assembly, the complex is composed of two ATP-binding proteins (MetN), two transmembrane proteins (MetI) and a solute-binding protein (MetQ).

The protein localises to the cell membrane. The enzyme catalyses L-methionine(out) + ATP + H2O = L-methionine(in) + ADP + phosphate + H(+). The catalysed reaction is D-methionine(out) + ATP + H2O = D-methionine(in) + ADP + phosphate + H(+). Functionally, part of the ABC transporter complex MetNIQ involved in methionine import. Responsible for energy coupling to the transport system. This chain is Methionine import ATP-binding protein MetN 2, found in Bacillus cereus (strain ATCC 10987 / NRS 248).